Consider the following 87-residue polypeptide: UPF0335 protein Avi_3695 (87 aa).

It belongs to the UPF0335 family.

The polypeptide is UPF0335 protein Avi_3695 (Allorhizobium ampelinum (strain ATCC BAA-846 / DSM 112012 / S4) (Agrobacterium vitis (strain S4))).